We begin with the raw amino-acid sequence, 371 residues long: Cytochrome b (371 aa).

4 consecutive transmembrane segments (helical) span residues 25-45, 69-90, 105-125, and 170-190; these read FGSM…FLAV, WMMQ…YIHI, WMSG…GYVL, and FFAL…LHII. Positions 75 and 89 each coordinate heme b. Residues histidine 174 and histidine 188 each coordinate heme b. Histidine 193 lines the a ubiquinone pocket. 4 consecutive transmembrane segments (helical) span residues 218–238, 280–300, 312–332, and 339–358; these read HKDL…VSFF, LGGA…PFTH, FSQL…WAAT, and FIVI…LLIP.

The protein belongs to the cytochrome b family. In terms of assembly, the cytochrome bc1 complex contains 3 respiratory subunits (MT-CYB, CYC1 and UQCRFS1), 2 core proteins (UQCRC1 and UQCRC2) and probably 6 low-molecular weight proteins. Requires heme b as cofactor.

It localises to the mitochondrion inner membrane. Its function is as follows. Component of the ubiquinol-cytochrome c reductase complex (complex III or cytochrome b-c1 complex) that is part of the mitochondrial respiratory chain. The b-c1 complex mediates electron transfer from ubiquinol to cytochrome c. Contributes to the generation of a proton gradient across the mitochondrial membrane that is then used for ATP synthesis. The polypeptide is Cytochrome b (MT-CYB) (Leiopython albertisii (Northern white-lipped python)).